Reading from the N-terminus, the 511-residue chain is S-layer protein B (511 aa).

The first 24 residues, 1–24, serve as a signal peptide directing secretion; the sequence is MVKYMNLIVLGMLMFGVFVTLSLG. Residues 358–392 adopt a coiled-coil conformation; it reads IQRLQSEVSVLESEVDQLKVEIQSLNETLTLQASE. Residues 487–507 form a helical membrane-spanning segment; the sequence is GGIILGVIALIIAIVAVVLVF.

Belongs to the Sulfolobales SlaB family. In terms of assembly, the mushroom-shaped unit cells of the Sulfolobales' S-layers may consist of three SlaB subunits and six SlaA subunits.

The protein localises to the secreted. It localises to the cell wall. The protein resides in the S-layer. It is found in the cell membrane. Functionally, S-layer small protein. May anchor the complex to the cell membrane. The sequence is that of S-layer protein B from Acidianus ambivalens (Desulfurolobus ambivalens).